We begin with the raw amino-acid sequence, 347 residues long: Transcription factor JunB (347 aa).

Residues Lys-4, Lys-33, and Lys-36 each participate in a glycyl lysine isopeptide (Lys-Gly) (interchain with G-Cter in SUMO2) cross-link. Positions 51-73 (KAPGARGPGPEGGGGGSYFSGQG) are disordered. The segment covering 56-68 (RGPGPEGGGGGSY) has biased composition (gly residues). Lys-81 is covalently cross-linked (Glycyl lysine isopeptide (Lys-Gly) (interchain with G-Cter in SUMO2)). Phosphothreonine occurs at positions 102 and 104. Ser-117 carries the post-translational modification Phosphoserine. Residue Lys-141 forms a Glycyl lysine isopeptide (Lys-Gly) (interchain with G-Cter in SUMO2) linkage. Residues 239 to 253 (FKEEPQTVPEARSRD) show a composition bias toward basic and acidic residues. Positions 239-260 (FKEEPQTVPEARSRDATPPVSP) are disordered. Lys-240 is subject to N6-acetyllysine; alternate. A Glycyl lysine isopeptide (Lys-Gly) (interchain with G-Cter in SUMO1); alternate cross-link involves residue Lys-240. Lys-240 is covalently cross-linked (Glycyl lysine isopeptide (Lys-Gly) (interchain with G-Cter in SUMO2); alternate). A Phosphoserine modification is found at Ser-251. Phosphothreonine is present on Thr-255. Position 259 is a phosphoserine (Ser-259). Positions 268–295 (RIKVERKRLRNRLAATKCRKRKLERIAR) are basic motif. Positions 268–331 (RIKVERKRLR…AQLKQKVMTH (64 aa)) constitute a bZIP domain. Positions 296–324 (LEDKVKTLKAENAGLSSTAGLLREQVAQL) are leucine-zipper. Residue Lys-343 forms a Glycyl lysine isopeptide (Lys-Gly) (interchain with G-Cter in SUMO2) linkage.

It belongs to the bZIP family. Jun subfamily. As to quaternary structure, binds DNA as a homodimer or as a heterodimer with another member of the Jun/Fos family. Component of an AP-1 transcription factor complex composed of JUN-FOS heterodimers composed of JUN-FOS heterodimers. As part of the AP-1 transcription factor complex, forms heterodimers with FOSB, thereby binding to the AP-1 consensus sequence and stimulating transcription. Interacts with ITCH (via its WW domains). Ubiquitinated by ITCH, leading to its degradation.

It is found in the nucleus. In terms of biological role, transcription factor involved in regulating gene activity following the primary growth factor response. Binds to the DNA sequence 5'-TGA[GC]TCA-3'. Heterodimerizes with proteins of the FOS family to form an AP-1 transcription complex, thereby enhancing its DNA binding activity to an AP-1 consensus sequence and its transcriptional activity. The chain is Transcription factor JunB (JUNB) from Homo sapiens (Human).